Here is a 351-residue protein sequence, read N- to C-terminus: Pinopsin (351 aa).

Residues 1–30 (MSSNSSQAPPNGTPGPFDGPQWPYQAPQST) are Extracellular-facing. Asn-4 carries N-linked (GlcNAc...) asparagine glycosylation. A helical transmembrane segment spans residues 31–55 (YVGVAVLMGTVVACASVVNGLVIVV). Topologically, residues 56–67 (SICYKKLRSPLN) are cytoplasmic. The helical transmembrane segment at 68 to 92 (YILVNLAVADLLVTLCGSSVSLSNN) threads the bilayer. Residues 93 to 107 (INGFFVFGRRMCELE) lie on the Extracellular side of the membrane. Cys-104 and Cys-181 are oxidised to a cystine. Residues 108–127 (GFMVSLTGIVGLWSLAILAL) traverse the membrane as a helical segment. The Cytoplasmic portion of the chain corresponds to 128–146 (ERYVVVCKPLGDFQFQRRH). A helical transmembrane segment spans residues 147–170 (AVSGCAFTWGWALLWSAPPLLGWS). The Extracellular portion of the chain corresponds to 171–194 (SYVPEGLRTSCGPNWYTGGSNNNS). Asn-192 carries an N-linked (GlcNAc...) asparagine glycan. A helical transmembrane segment spans residues 195-222 (YILSLFVTCFVLPLSLILFSYTNLLLTL). Over 223-244 (RAAAAQQKEADTTQRAEREVTR) the chain is Cytoplasmic. The chain crosses the membrane as a helical span at residues 245 to 268 (MVIVMVMAFLLCWLPYSTFALVVA). Over 269–276 (THKGIIIQ) the chain is Extracellular. A helical transmembrane segment spans residues 277–301 (PVLASLPSYFSKTATVYNPIIYVFM). Lys-288 is subject to N6-(retinylidene)lysine. The Cytoplasmic segment spans residues 302-351 (NKQFQSCLLEMLCCGYQPQRTGKASPGTPGPHADVTAAGLRNKVMPAHPV). Residues Cys-314 and Cys-315 are each lipidated (S-palmitoyl cysteine).

This sequence belongs to the G-protein coupled receptor 1 family. Opsin subfamily. Phosphorylated on some or all of the serine and threonine residues present in the C-terminal region. In terms of tissue distribution, pineal gland.

The protein resides in the membrane. Produces a slow and prolonged phototransduction response consistent with the non-visual function of pineal photoreception. This chain is Pinopsin, found in Gallus gallus (Chicken).